Reading from the N-terminus, the 232-residue chain is MRVLLIEDDSAIAQSIELMLKSESFNVYTTDLGEEGIDLGKLYDYDIILLDLNLPDMSGYEVLRTLRLSKVKTPILILSGMAGIEDKVRGLGFGADDYMTKPFHKDELIARIHAIVRRSKGHAQSVITTGDLVVNLDAKTVEVAGQRVHLTGKEYQMLELLSLRKGTTLTKEMFLNHLYGGMDEPELKIIDVFICKLRKKLDAVSGNQSYIETVWGRGYVLREPDAEMRESA.

Residues 2–116 enclose the Response regulatory domain; it reads RVLLIEDDSA…ELIARIHAIV (115 aa). The residue at position 51 (D51) is a 4-aspartylphosphate. Positions 124–223 form a DNA-binding region, ompR/PhoB-type; the sequence is QSVITTGDLV…VWGRGYVLRE (100 aa).

As to quaternary structure, forms an asymmetric heterotetramer with ChpT (2:2). There are at least two modes of interaction between ChpT and CtrA, only one of which is competent to catalyze His-Asp phosphoryl transfer. Is phosphorylated by ChpT-P on Asp-51.

The protein localises to the cytoplasm. Component of a regulatory phosphorelay system that controls B.abortus cell growth, division, and intracellular survival inside mammalian host cells. This signaling pathway is composed of CckA, ChpT, CtrA and CpdR. CtrA is a response regulator substrate of ChpT. When phosphorylated, directly regulates the expression of ccrM. Is also probably involved in the transcriptional regulation of rpoD, pleC, minC and ftsE genes. This chain is Cell cycle response regulator CtrA (ctrA), found in Brucella abortus (strain S19).